We begin with the raw amino-acid sequence, 275 residues long: tRNA (guanine-N(1)-)-methyltransferase (275 aa).

S-adenosyl-L-methionine is bound by residues Gly-124 and 149 to 154; that span reads IGDYVL.

Belongs to the RNA methyltransferase TrmD family. As to quaternary structure, homodimer.

The protein resides in the cytoplasm. The catalysed reaction is guanosine(37) in tRNA + S-adenosyl-L-methionine = N(1)-methylguanosine(37) in tRNA + S-adenosyl-L-homocysteine + H(+). Functionally, specifically methylates guanosine-37 in various tRNAs. The chain is tRNA (guanine-N(1)-)-methyltransferase from Bifidobacterium animalis subsp. lactis (strain AD011).